A 1159-amino-acid polypeptide reads, in one-letter code: Ferroxidase HEPHL1 (1159 aa).

The N-terminal stretch at 1 to 24 (MPRKQPAGCIFLLTFLGLSGLVGT) is a signal peptide. Plastocyanin-like domains are found at residues 25–207 (VTRT…LLVC), 218–366 (TRND…VDNC), 379–561 (QRRY…LLVC), 571–719 (TQKG…VSSC), 731–907 (MIRT…LITC), and 915–1092 (KGRR…VPSN). At 25-1114 (VTRTYYIGIV…KNLGPTGAKA (1090 aa)) the chain is on the extracellular side. Cu cation-binding residues include H127 and H129. N161 carries an N-linked (GlcNAc...) asparagine glycan. C181 and C207 are joined by a disulfide. H187 and H189 together coordinate Cu cation. The N-linked (GlcNAc...) asparagine glycan is linked to N236. A disulfide bridge connects residues C285 and C366. Cu cation-binding residues include H304, C347, and H352. An N-linked (GlcNAc...) asparagine glycan is attached at N407. A disulfide bridge links C535 with C561. A glycan (N-linked (GlcNAc...) asparagine) is linked at N589. C638 and C719 are oxidised to a cystine. H657, C700, H705, and M710 together coordinate Cu cation. N772 is a glycosylation site (N-linked (GlcNAc...) asparagine). A disulfide bridge links C881 with C907. Residue N935 is glycosylated (N-linked (GlcNAc...) asparagine). Residues H1003, H1006, H1008, H1048, C1049, H1050, H1054, and M1059 each contribute to the Cu cation site. The helical transmembrane segment at 1115–1135 (ALVILFIIGLLLLITTVILSL) threads the bilayer. Residues 1136–1159 (RLCSAMKQTDYQQVQSCALPTDAL) lie on the Cytoplasmic side of the membrane.

The protein belongs to the multicopper oxidase family. It depends on Cu cation as a cofactor.

The protein localises to the membrane. The catalysed reaction is 4 Fe(2+) + O2 + 4 H(+) = 4 Fe(3+) + 2 H2O. In terms of biological role, is a copper-binding glycoprotein with ferroxidase activity. It oxidizes Fe(2+) to Fe(3+) without releasing radical oxygen species. May be involved in the regulation of intracellular iron content. The sequence is that of Ferroxidase HEPHL1 (HEPHL1) from Homo sapiens (Human).